A 400-amino-acid chain; its full sequence is Tyrosine--tRNA ligase (400 aa).

The 'HIGH' region motif lies at 45-54 (PTAPDLHLGH). The 'KMSKS' region motif lies at 230–234 (KMSKS). An ATP-binding site is contributed by Lys-233. Residues 339–399 (EWIARVLVIA…GKRRFAKVII (61 aa)) form the S4 RNA-binding domain.

It belongs to the class-I aminoacyl-tRNA synthetase family. TyrS type 2 subfamily. As to quaternary structure, homodimer.

The protein localises to the cytoplasm. The enzyme catalyses tRNA(Tyr) + L-tyrosine + ATP = L-tyrosyl-tRNA(Tyr) + AMP + diphosphate + H(+). Functionally, catalyzes the attachment of tyrosine to tRNA(Tyr) in a two-step reaction: tyrosine is first activated by ATP to form Tyr-AMP and then transferred to the acceptor end of tRNA(Tyr). The protein is Tyrosine--tRNA ligase of Helicobacter hepaticus (strain ATCC 51449 / 3B1).